Consider the following 1243-residue polypeptide: Membrane-associated phosphatidylinositol transfer protein 1 (1243 aa).

Threonine 59, threonine 282, and threonine 287 each carry phosphothreonine. The disordered stretch occupies residues 259-330; the sequence is CNTGSEGPEA…HGGGVSPQSL (72 aa). Residues 271 to 283 show a composition bias toward polar residues; the sequence is PGKSSTEARPGTS. Residues 299-319 show a composition bias toward low complexity; sequence ASPDASFGKQWSSSSRSSYSS. Phosphoserine occurs at positions 300, 304, 319, 326, 329, 342, 345, 346, and 373. At serine 382 the chain carries Phosphoserine; by CDK1. The span at 581-593 shows a compositional bias: low complexity; it reads AGPGSRGSSRRGS. The tract at residues 581–679 is disordered; sequence AGPGSRGSSR…PASSEAPDGP (99 aa). 3 positions are modified to phosphoserine: serine 593, serine 600, and serine 621. A compositionally biased stretch (polar residues) spans 643–658; that stretch reads GSQNSLQVASTATSSG. The 195-residue stretch at 684 to 878 folds into the DDHD domain; that stretch reads RLDFKVSGFF…VVAFILRQVI (195 aa). Serine 895 is subject to Phosphoserine. The segment at 1206–1243 is disordered; the sequence is LLRSRGPSQVDREGPGTPPTTLARGKTRSISLKLDSEE. Residues arginine 1210 and arginine 1217 each carry the omega-N-methylarginine modification. Serine 1236 is subject to Phosphoserine.

The protein belongs to the PtdIns transfer protein family. PI transfer class IIA subfamily. As to quaternary structure, interacts with PTK2B via its C-terminus. Interacts with RHOA. Has higher affinity for the inactive, GDP-bound form of RHOA. The CDK1-phosphorylated form interacts with PLK1. Interacts with VAPB and PIK4CA. In terms of processing, phosphorylated on multiple sites by CDK1 at the onset of mitosis. Phosphorylation facilitates dissociation from the Golgi complex and is required for interaction with PLK1. Post-translationally, phosphorylated on threonine residues upon treatment with oleic acid. Phosphorylated on tyrosine residues by PTK2B. In terms of tissue distribution, detected at high levels in brain, and at lower levels in lung, kidney, spleen and liver (at protein level). Ubiquitous. Highly expressed in embryonic retina and the central nervous system.

The protein localises to the cytoplasm. It is found in the golgi apparatus. Its subcellular location is the golgi stack membrane. The protein resides in the endoplasmic reticulum membrane. It localises to the lipid droplet. The protein localises to the cleavage furrow. It is found in the midbody. It catalyses the reaction a 1,2-diacyl-sn-glycero-3-phospho-(1D-myo-inositol)(in) = a 1,2-diacyl-sn-glycero-3-phospho-(1D-myo-inositol)(out). In terms of biological role, catalyzes the transfer of phosphatidylinositol (PI) between membranes. Binds PI. Also binds phosphatidylcholine (PC) and phosphatidic acid (PA) with the binding affinity order of PI &gt; PA &gt; PC. Regulates RHOA activity, and plays a role in cytoskeleton remodeling. Necessary for normal completion of cytokinesis. Plays a role in maintaining normal diacylglycerol levels in the Golgi apparatus. Necessary for maintaining the normal structure of the endoplasmic reticulum and the Golgi apparatus. Required for protein export from the endoplasmic reticulum and the Golgi. Binds calcium ions. The polypeptide is Membrane-associated phosphatidylinositol transfer protein 1 (Pitpnm1) (Mus musculus (Mouse)).